Reading from the N-terminus, the 817-residue chain is Lon protease (817 aa).

Positions 44–239 constitute a Lon N-terminal domain; the sequence is LPILPLRNTV…ETLRYMNVEL (196 aa). 390 to 397 is an ATP binding site; sequence GPPGVGKT. The Lon proteolytic domain maps to 626–807; that stretch reads NDVAGVVTGL…SEVLAIALTD (182 aa). Active-site residues include Ser-713 and Lys-756.

Belongs to the peptidase S16 family. In terms of assembly, homohexamer. Organized in a ring with a central cavity.

It is found in the cytoplasm. It catalyses the reaction Hydrolysis of proteins in presence of ATP.. Functionally, ATP-dependent serine protease that mediates the selective degradation of mutant and abnormal proteins as well as certain short-lived regulatory proteins. Required for cellular homeostasis and for survival from DNA damage and developmental changes induced by stress. Degrades polypeptides processively to yield small peptide fragments that are 5 to 10 amino acids long. Binds to DNA in a double-stranded, site-specific manner. The sequence is that of Lon protease from Flavobacterium johnsoniae (strain ATCC 17061 / DSM 2064 / JCM 8514 / BCRC 14874 / CCUG 350202 / NBRC 14942 / NCIMB 11054 / UW101) (Cytophaga johnsonae).